The following is a 157-amino-acid chain: Endoribonuclease YbeY (157 aa).

The Zn(2+) site is built by His-116, His-120, and His-126.

Belongs to the endoribonuclease YbeY family. Requires Zn(2+) as cofactor.

It is found in the cytoplasm. Its function is as follows. Single strand-specific metallo-endoribonuclease involved in late-stage 70S ribosome quality control and in maturation of the 3' terminus of the 16S rRNA. The sequence is that of Endoribonuclease YbeY from Renibacterium salmoninarum (strain ATCC 33209 / DSM 20767 / JCM 11484 / NBRC 15589 / NCIMB 2235).